Reading from the N-terminus, the 445-residue chain is Phosphoglucosamine mutase (445 aa).

Residue S99 is the Phosphoserine intermediate of the active site. Positions 99, 242, 244, and 246 each coordinate Mg(2+). S99 carries the post-translational modification Phosphoserine.

It belongs to the phosphohexose mutase family. Requires Mg(2+) as cofactor. Activated by phosphorylation.

It catalyses the reaction alpha-D-glucosamine 1-phosphate = D-glucosamine 6-phosphate. In terms of biological role, catalyzes the conversion of glucosamine-6-phosphate to glucosamine-1-phosphate. This is Phosphoglucosamine mutase from Campylobacter jejuni subsp. jejuni serotype O:23/36 (strain 81-176).